The sequence spans 418 residues: Putative competence-damage inducible protein (418 aa).

This sequence belongs to the CinA family.

This is Putative competence-damage inducible protein from Streptococcus pneumoniae serotype 19F (strain G54).